Reading from the N-terminus, the 368-residue chain is 1-deoxy-D-xylulose 5-phosphate reductoisomerase (368 aa).

Residues threonine 9, glycine 10, serine 11, isoleucine 12, asparagine 35, and asparagine 106 each contribute to the NADPH site. Lysine 107 is a 1-deoxy-D-xylulose 5-phosphate binding site. Residue glutamate 108 participates in NADPH binding. Aspartate 132 lines the Mn(2+) pocket. 1-deoxy-D-xylulose 5-phosphate-binding residues include serine 133, glutamate 134, serine 158, and histidine 181. Residue glutamate 134 participates in Mn(2+) binding. An NADPH-binding site is contributed by glycine 187. 1-deoxy-D-xylulose 5-phosphate contacts are provided by serine 194, asparagine 199, lysine 200, and glutamate 203. Glutamate 203 lines the Mn(2+) pocket.

This sequence belongs to the DXR family. Mg(2+) is required as a cofactor. Mn(2+) serves as cofactor.

The enzyme catalyses 2-C-methyl-D-erythritol 4-phosphate + NADP(+) = 1-deoxy-D-xylulose 5-phosphate + NADPH + H(+). It participates in isoprenoid biosynthesis; isopentenyl diphosphate biosynthesis via DXP pathway; isopentenyl diphosphate from 1-deoxy-D-xylulose 5-phosphate: step 1/6. Catalyzes the NADPH-dependent rearrangement and reduction of 1-deoxy-D-xylulose-5-phosphate (DXP) to 2-C-methyl-D-erythritol 4-phosphate (MEP). This is 1-deoxy-D-xylulose 5-phosphate reductoisomerase from Mycoplasmoides gallisepticum (strain R(low / passage 15 / clone 2)) (Mycoplasma gallisepticum).